The chain runs to 412 residues: Multifunctional CCA protein (412 aa).

2 residues coordinate ATP: glycine 8 and arginine 11. The CTP site is built by glycine 8 and arginine 11. Mg(2+)-binding residues include aspartate 21 and aspartate 23. Residues arginine 91, arginine 137, and arginine 140 each coordinate ATP. Arginine 91, arginine 137, and arginine 140 together coordinate CTP. Residues threonine 228–tryptophan 329 enclose the HD domain.

The protein belongs to the tRNA nucleotidyltransferase/poly(A) polymerase family. Bacterial CCA-adding enzyme type 1 subfamily. Monomer. Can also form homodimers and oligomers. Requires Mg(2+) as cofactor. It depends on Ni(2+) as a cofactor.

It catalyses the reaction a tRNA precursor + 2 CTP + ATP = a tRNA with a 3' CCA end + 3 diphosphate. It carries out the reaction a tRNA with a 3' CCA end + 2 CTP + ATP = a tRNA with a 3' CCACCA end + 3 diphosphate. In terms of biological role, catalyzes the addition and repair of the essential 3'-terminal CCA sequence in tRNAs without using a nucleic acid template. Adds these three nucleotides in the order of C, C, and A to the tRNA nucleotide-73, using CTP and ATP as substrates and producing inorganic pyrophosphate. tRNA 3'-terminal CCA addition is required both for tRNA processing and repair. Also involved in tRNA surveillance by mediating tandem CCA addition to generate a CCACCA at the 3' terminus of unstable tRNAs. While stable tRNAs receive only 3'-terminal CCA, unstable tRNAs are marked with CCACCA and rapidly degraded. The sequence is that of Multifunctional CCA protein from Escherichia coli O139:H28 (strain E24377A / ETEC).